The sequence spans 543 residues: Carboxypeptidase Y homolog A (543 aa).

The first 17 residues, 1–17 (MRVLPATLLVGAATAAA), serve as a signal peptide directing secretion. Residues 18 to 124 (PPFQQILGLP…KLEAYDLRVK (107 aa)) constitute a propeptide that is removed on maturation. Cystine bridges form between C179–C419, C313–C327, C337–C360, C344–C353, and C382–C389. A glycan (N-linked (GlcNAc...) asparagine) is linked at N210. S266 is an active-site residue. Residue D458 is part of the active site. N509 carries an N-linked (GlcNAc...) asparagine glycan. H520 is an active-site residue.

It belongs to the peptidase S10 family.

Its subcellular location is the vacuole. It carries out the reaction Release of a C-terminal amino acid with broad specificity.. In terms of biological role, vacuolar carboxypeptidase involved in degradation of small peptides. Digests preferentially peptides containing an aliphatic or hydrophobic residue in P1' position, as well as methionine, leucine or phenylalanine in P1 position of ester substrate. The sequence is that of Carboxypeptidase Y homolog A (cpyA) from Aspergillus fumigatus (strain ATCC MYA-4609 / CBS 101355 / FGSC A1100 / Af293) (Neosartorya fumigata).